A 367-amino-acid chain; its full sequence is Aminomethyltransferase (367 aa).

This sequence belongs to the GcvT family. In terms of assembly, the glycine cleavage system is composed of four proteins: P, T, L and H.

It carries out the reaction N(6)-[(R)-S(8)-aminomethyldihydrolipoyl]-L-lysyl-[protein] + (6S)-5,6,7,8-tetrahydrofolate = N(6)-[(R)-dihydrolipoyl]-L-lysyl-[protein] + (6R)-5,10-methylene-5,6,7,8-tetrahydrofolate + NH4(+). In terms of biological role, the glycine cleavage system catalyzes the degradation of glycine. In Shouchella clausii (strain KSM-K16) (Alkalihalobacillus clausii), this protein is Aminomethyltransferase.